The primary structure comprises 294 residues: Diaminopimelate epimerase (294 aa).

Residues N11 and N78 each contribute to the substrate site. The Proton donor role is filled by C87. Residues 88 to 89, N167, N203, and 221 to 222 each bind substrate; these read GN and ER. The Proton acceptor role is filled by C230. 231–232 contributes to the substrate binding site; the sequence is GT.

The protein belongs to the diaminopimelate epimerase family. In terms of assembly, homodimer.

The protein resides in the cytoplasm. The enzyme catalyses (2S,6S)-2,6-diaminopimelate = meso-2,6-diaminopimelate. Its pathway is amino-acid biosynthesis; L-lysine biosynthesis via DAP pathway; DL-2,6-diaminopimelate from LL-2,6-diaminopimelate: step 1/1. Catalyzes the stereoinversion of LL-2,6-diaminopimelate (L,L-DAP) to meso-diaminopimelate (meso-DAP), a precursor of L-lysine and an essential component of the bacterial peptidoglycan. The chain is Diaminopimelate epimerase from Mycobacterium avium (strain 104).